The primary structure comprises 1231 residues: ATP-dependent RNA helicase DHX30 (1231 aa).

The segment at 39–65 (PDGLEGARQEDEEEQPPPPGAEEQSTA) is disordered. 2 consecutive DRBM domains span residues 80 to 148 (PKNL…CQLF) and 292 to 359 (PKNL…CQKL). One can recognise a Helicase ATP-binding domain in the interval 488-656 (LSAIEQNPVV…FGGCPVVKVP (169 aa)). Position 501–508 (501–508 (GDTGCGKT)) interacts with ATP. The DEAH box signature appears at 603 to 606 (DEVH). The 174-residue stretch at 697–870 (LITDLVLQID…NLVVQAKIHM (174 aa)) folds into the Helicase C-terminal domain.

This sequence belongs to the DEAD box helicase family. DEAH subfamily.

It localises to the cytoplasm. It is found in the mitochondrion. Its subcellular location is the mitochondrion matrix. The protein localises to the mitochondrion nucleoid. The enzyme catalyses ATP + H2O = ADP + phosphate + H(+). Its function is as follows. RNA-dependent helicase. Plays an important role in the assembly of the mitochondrial large ribosomal subunit. Required for optimal function of the zinc-finger antiviral protein ZC3HAV1. Associates with mitochondrial DNA. Involved in nervous system development and differentiation through its involvement in the up-regulation of a number of genes which are required for neurogenesis, including GSC, NCAM1, neurogenin, and NEUROD. This chain is ATP-dependent RNA helicase DHX30 (DHX30), found in Gallus gallus (Chicken).